Consider the following 84-residue polypeptide: uncharacterized protein (84 aa).

A helical transmembrane segment spans residues 10 to 32 (AFSLAYYIIIHLLCLSYIYEIIH).

The protein localises to the membrane. This is an uncharacterized protein from Saccharomyces cerevisiae (strain ATCC 204508 / S288c) (Baker's yeast).